The chain runs to 625 residues: Autophagy-related protein 13b (625 aa).

Low complexity-rich tracts occupy residues 322-332 and 455-477; these read PSVSCSPSPTR and PSGVRPSSSSSPRISFSRSSSRS. 3 disordered regions span residues 322 to 388, 452 to 527, and 544 to 564; these read PSVS…AVPR, FRRP…YPKK, and PPLRQDVSESSRPEICSNNNK. The span at 498 to 518 shows a compositional bias: basic and acidic residues; the sequence is ITDRNSRPGSFDHRGDIHEPF.

This sequence belongs to the ATG13 family. Plant subfamily.

The protein resides in the cytoplasmic vesicle. Its subcellular location is the autophagosome. In terms of biological role, involved in autophagy in a nutritional condition dependent manner. The ATG1-ATG13 protein kinase complex regulates downstream events required for autophagosome enclosure and/or vacuolar delivery. Becomes a target of autophagy under nutrient starvation. Connects autophagy to plant nutritional status. This chain is Autophagy-related protein 13b, found in Arabidopsis thaliana (Mouse-ear cress).